The primary structure comprises 69 residues: Amphipathic peptide Hp1404 (69 aa).

Residues 1–23 (MKTQFAILMITVVLMQMLVQTEG) form the signal peptide. Phe37 carries the phenylalanine amide modification. Positions 41 to 69 (GLKNLDQLDDSFDSDLSDADVKLLREMFK) are excised as a propeptide.

Belongs to the non-disulfide-bridged peptide (NDBP) superfamily. Short antimicrobial peptide (group 4) family. In terms of tissue distribution, expressed by the venom gland.

It localises to the secreted. The protein resides in the target cell membrane. Its activity is regulated as follows. Antibacterial activity is decreased by serum. In terms of biological role, antimicrobial peptide that acts by inducing concentration-dependent membrane disruption, implying a membrane-lytic mode of action. Acts with potent activity against Gram-positive bacteria (MIC=4.04-16.16 uM) including methicillin-resistant S.aureus (MRSA). Its activity on Gram-negative bacteria is controversial. Li and colleagues (2014) describe no activity towards E.coli and P.aeruginosa, while Kim and colleagues (2018) describe a potent activity towards P.aeruginosa (MIC=3.13-12.5 uM), and Luo and colleagues (2021) describe a potent activity against antibiotic-sensitive and -resistant Acinetobacter baumannii strains (MIC=3.2-10 uM). On S.aureus, possibly acts by impairing an unknown intracellular target and/or by interacting with the membrane, leading to the lateral expansion of the membrane area at high MIC concentrations, resulting in the formation of mesosome-like structures that leads to cell lysis. Shows moderate inhibition of P.aeruginosa biofilm formation. Administration of this peptide at sub-MIC concentrations in multiple treatments does not lead to resistance in S.aureus. Exhibits low toxicity and hemolytic activity against mammalian cell lines and BALB/c mice. In vivo, improves the survival rate of the MRSA infected BALB/c mice in the peritonitis model. The sequence is that of Amphipathic peptide Hp1404 from Heterometrus petersii (Asian forest scorpion).